Consider the following 140-residue polypeptide: Seminal plasma protein A3 (140 aa).

A signal peptide spans methionine 1–glycine 25. Fibronectin type-II domains follow at residues threonine 49–lysine 93 and asparagine 94–cysteine 140. 4 disulfides stabilise this stretch: cysteine 54–cysteine 78, cysteine 68–cysteine 91, cysteine 99–cysteine 125, and cysteine 113–cysteine 140.

This sequence belongs to the seminal plasma protein family.

Its subcellular location is the secreted. In terms of biological role, the BSP-A proteins from seminal plasma exhibit both simulatory and inhibitory actions on the release of pituitary gonadotropins. The exact function of these proteins is not known. This Bos taurus (Bovine) protein is Seminal plasma protein A3.